The chain runs to 150 residues: Urease accessory protein UreE (150 aa).

Belongs to the UreE family.

The protein resides in the cytoplasm. Functionally, involved in urease metallocenter assembly. Binds nickel. Probably functions as a nickel donor during metallocenter assembly. The chain is Urease accessory protein UreE from Staphylococcus aureus (strain MRSA252).